A 554-amino-acid polypeptide reads, in one-letter code: Arginine--tRNA ligase (554 aa).

Residues 132 to 142 (ANPTGPIHLGG) carry the 'HIGH' region motif.

Belongs to the class-I aminoacyl-tRNA synthetase family. Monomer.

Its subcellular location is the cytoplasm. It catalyses the reaction tRNA(Arg) + L-arginine + ATP = L-arginyl-tRNA(Arg) + AMP + diphosphate. This is Arginine--tRNA ligase from Kineococcus radiotolerans (strain ATCC BAA-149 / DSM 14245 / SRS30216).